The primary structure comprises 160 residues: SsrA-binding protein (160 aa).

Belongs to the SmpB family.

It is found in the cytoplasm. In terms of biological role, required for rescue of stalled ribosomes mediated by trans-translation. Binds to transfer-messenger RNA (tmRNA), required for stable association of tmRNA with ribosomes. tmRNA and SmpB together mimic tRNA shape, replacing the anticodon stem-loop with SmpB. tmRNA is encoded by the ssrA gene; the 2 termini fold to resemble tRNA(Ala) and it encodes a 'tag peptide', a short internal open reading frame. During trans-translation Ala-aminoacylated tmRNA acts like a tRNA, entering the A-site of stalled ribosomes, displacing the stalled mRNA. The ribosome then switches to translate the ORF on the tmRNA; the nascent peptide is terminated with the 'tag peptide' encoded by the tmRNA and targeted for degradation. The ribosome is freed to recommence translation, which seems to be the essential function of trans-translation. The protein is SsrA-binding protein of Proteus mirabilis (strain HI4320).